The primary structure comprises 647 residues: Acetyl-coenzyme A synthetase (647 aa).

CoA-binding positions include Arg192–Arg195, Thr310, and Asn334. ATP-binding positions include Gly386–Pro388, Asp410–Thr415, Asp499, and Arg514. Ser522 serves as a coordination point for CoA. Position 525 (Arg525) interacts with ATP. Residues Val536, His538, and Val541 each coordinate Mg(2+). Arg583 contributes to the CoA binding site. Lys608 is subject to N6-acetyllysine.

This sequence belongs to the ATP-dependent AMP-binding enzyme family. Mg(2+) serves as cofactor. Acetylated. Deacetylation by the SIR2-homolog deacetylase activates the enzyme.

The catalysed reaction is acetate + ATP + CoA = acetyl-CoA + AMP + diphosphate. Catalyzes the conversion of acetate into acetyl-CoA (AcCoA), an essential intermediate at the junction of anabolic and catabolic pathways. AcsA undergoes a two-step reaction. In the first half reaction, AcsA combines acetate with ATP to form acetyl-adenylate (AcAMP) intermediate. In the second half reaction, it can then transfer the acetyl group from AcAMP to the sulfhydryl group of CoA, forming the product AcCoA. This chain is Acetyl-coenzyme A synthetase, found in Caulobacter vibrioides (strain ATCC 19089 / CIP 103742 / CB 15) (Caulobacter crescentus).